Consider the following 138-residue polypeptide: Small ribosomal subunit protein uS11c (138 aa).

Positions 1 to 21 (MTKSIPRIGSRRGGRIASRKN) are disordered. Residues 9–21 (GSRRGGRIASRKN) show a composition bias toward basic residues.

Belongs to the universal ribosomal protein uS11 family. In terms of assembly, part of the 30S ribosomal subunit.

The protein localises to the plastid. Its subcellular location is the chloroplast. The protein is Small ribosomal subunit protein uS11c of Calycanthus floridus var. glaucus (Eastern sweetshrub).